Here is a 254-residue protein sequence, read N- to C-terminus: Polysaccharide deacetylase domain-containing protein ECU11_0510 (254 aa).

The NodB homology domain maps to 26–210 (GMIAINFVDG…IGKDKGYRFV (185 aa)).

This chain is Polysaccharide deacetylase domain-containing protein ECU11_0510, found in Encephalitozoon cuniculi (strain GB-M1) (Microsporidian parasite).